The primary structure comprises 78 residues: RNA-binding protein KhpA (78 aa).

A KH domain is found at 29 to 78; sequence TIIYELTVAKPDIGKIIGKEGRTIKAIRTLLVSVASRNNVKVSLEIMEDK.

This sequence belongs to the KhpA RNA-binding protein family.

The protein resides in the cytoplasm. A probable RNA-binding protein. This is RNA-binding protein KhpA from Chlamydia caviae (strain ATCC VR-813 / DSM 19441 / 03DC25 / GPIC) (Chlamydophila caviae).